Consider the following 860-residue polypeptide: Glucans biosynthesis glucosyltransferase H (860 aa).

Helical transmembrane passes span 141-161, 187-207, 515-535, 572-592, 599-619, and 682-702; these read FILL…MKGI, VLPY…FCWV, VFLT…FLVL, LFST…MLIW, FGGV…SVLL, and FLWW…VSVI.

Belongs to the glycosyltransferase 2 family. OpgH subfamily.

The protein localises to the cell inner membrane. It functions in the pathway glycan metabolism; osmoregulated periplasmic glucan (OPG) biosynthesis. In terms of biological role, involved in the biosynthesis of osmoregulated periplasmic glucans (OPGs). This is Glucans biosynthesis glucosyltransferase H from Pseudomonas paraeruginosa (strain DSM 24068 / PA7) (Pseudomonas aeruginosa (strain PA7)).